Reading from the N-terminus, the 227-residue chain is 7-cyano-7-deazaguanine synthase (227 aa).

Residue 8-18 (VSGGADSATVL) participates in ATP binding. 4 residues coordinate Zn(2+): cysteine 192, cysteine 202, cysteine 205, and cysteine 208.

It belongs to the QueC family. The cofactor is Zn(2+).

It carries out the reaction 7-carboxy-7-deazaguanine + NH4(+) + ATP = 7-cyano-7-deazaguanine + ADP + phosphate + H2O + H(+). Its pathway is purine metabolism; 7-cyano-7-deazaguanine biosynthesis. Functionally, catalyzes the ATP-dependent conversion of 7-carboxy-7-deazaguanine (CDG) to 7-cyano-7-deazaguanine (preQ(0)). This chain is 7-cyano-7-deazaguanine synthase, found in Rickettsia akari (strain Hartford).